Consider the following 808-residue polypeptide: Enhancer of polycomb homolog 2 (808 aa).

Residues Lys135, Lys195, and Lys324 each participate in a glycyl lysine isopeptide (Lys-Gly) (interchain with G-Cter in SUMO2) cross-link. The disordered stretch occupies residues 337–357 (YPKKPKAEAGIAPQQPTPETL). Lys362 participates in a covalent cross-link: Glycyl lysine isopeptide (Lys-Gly) (interchain with G-Cter in SUMO2). Disordered regions lie at residues 371–397 (QSSDEDEFPQVLSPASEAEEENDPDGS), 595–630 (QRQQLAQLHQKQQSQHSSQQTHPKAQGSSTSDCMSK), and 645–682 (VSAPVPSRSEGSKEQNTGHNNMNGVVQPSGPSKTLYST). A compositionally biased stretch (low complexity) spans 595–614 (QRQQLAQLHQKQQSQHSSQQ). Polar residues-rich tracts occupy residues 615-630 (THPKAQGSSTSDCMSK) and 658-682 (EQNTGHNNMNGVVQPSGPSKTLYST). Residue Ser755 is modified to Phosphoserine.

This sequence belongs to the enhancer of polycomb family.

It localises to the nucleus. Functionally, may play a role in transcription or DNA repair. This is Enhancer of polycomb homolog 2 (Epc2) from Mus musculus (Mouse).